The following is a 92-amino-acid chain: Ictacalcin (92 aa).

EF-hand domains lie at 12 to 47 (ISTF…AFGN) and 49 to 84 (SDQA…TTML). T27, E32, D62, N64, D66, and E73 together coordinate Ca(2+).

Belongs to the S-100 family. Abundant in epithelial cells of olfactory rosette, barbel, skin and gill but not brain or muscle.

Functionally, plays an important role in catfish calcium homeostasis. This is Ictacalcin from Ictalurus punctatus (Channel catfish).